The primary structure comprises 303 residues: Putative ring-cleaving dioxygenase MhqE (303 aa).

VOC domains lie at Gly-5–Asp-129 and Gly-150–Asp-266. Fe cation-binding residues include His-8, His-215, and Glu-262.

This sequence belongs to the extradiol ring-cleavage dioxygenase family. The cofactor is Fe(2+).

It is found in the cytoplasm. In terms of biological role, putative ring-cleavage dioxygenase that may contribute to the degradation of aromatic compounds. The polypeptide is Putative ring-cleaving dioxygenase MhqE (mhqE) (Bacillus subtilis (strain 168)).